Consider the following 344-residue polypeptide: Pre-mRNA-splicing factor cwc-21 (344 aa).

The span at 1 to 19 shows a compositional bias: polar residues; the sequence is MSDNVGLSTPRGSGTSGYV. 2 disordered regions span residues 1–58 and 98–344; these read MSDN…LEHD and EMER…DNRD. A compositionally biased stretch (basic and acidic residues) spans 38–58; the sequence is KDFDSLKHQPRQPDKGLLEHD. The 44-residue stretch at 55–98 folds into the CWF21 domain; the sequence is LEHDRKREVEVKVFELRDKLEEEGVEEDEIETRCDELRRKLLAE. The stretch at 69-105 forms a coiled coil; that stretch reads ELRDKLEEEGVEEDEIETRCDELRRKLLAEMERNQNS. 3 stretches are compositionally biased toward basic and acidic residues: residues 120–167, 188–226, and 238–277; these read QVHE…REAN, RGGDRDRGRGRGFGRRDRDEGRLNSRERRAPPRDWDRPP, and GGRDREVDSYRGAAGRDRSRSRSPIRERSRTRSPVRDTGR. Residues 288–306 show a composition bias toward basic residues; that stretch reads SRSRSRSRSYSRSRSPPRR. Composition is skewed to basic and acidic residues over residues 307 to 316 and 327 to 344; these read RAADSQDRSL and SPDRDRYREKYRDRDNRD.

This sequence belongs to the CWC21 family. As to quaternary structure, associates with the NTC complex (or PRP19-associated complex). The NTC complex associates with the spliceosome after the release of the U1 and U4 snRNAs and forms the CWC spliceosome subcomplex reminiscent of a late-stage spliceosome.

Its subcellular location is the cytoplasm. The protein localises to the nucleus. Functionally, involved in pre-mRNA splicing. May function at or prior to the first catalytic step of splicing at the catalytic center of the spliceosome. May do so by stabilizing the catalytic center or the position of the RNA substrate. This chain is Pre-mRNA-splicing factor cwc-21 (cwc-21), found in Neurospora crassa (strain ATCC 24698 / 74-OR23-1A / CBS 708.71 / DSM 1257 / FGSC 987).